Consider the following 768-residue polypeptide: Integrin beta-8 (768 aa).

The first 42 residues, 1-42 (MCGSALGLPPAAFVRLRSCRPGPAAFLRAAWVLSLVLGLGRS), serve as a signal peptide directing secretion. Topologically, residues 43–683 (ENSRCASSHA…ECFSSPSYLR (641 aa)) are extracellular. A PSI domain is found at 46-95 (RCASSHAVSCSECLALGPDCGWCVHEDFISGGPRSERCDIVSNLISKGCP). Cystine bridges form between cysteine 47–cysteine 65, cysteine 55–cysteine 469, cysteine 58–cysteine 83, cysteine 68–cysteine 94, cysteine 211–cysteine 218, cysteine 266–cysteine 307, cysteine 407–cysteine 419, cysteine 439–cysteine 467, cysteine 471–cysteine 491, cysteine 471–cysteine 494, cysteine 481–cysteine 494, cysteine 499–cysteine 528, cysteine 511–cysteine 526, cysteine 520–cysteine 531, cysteine 533–cysteine 546, cysteine 553–cysteine 567, cysteine 561–cysteine 572, cysteine 574–cysteine 583, cysteine 585–cysteine 609, cysteine 593–cysteine 607, cysteine 601–cysteine 612, cysteine 614–cysteine 624, cysteine 627–cysteine 630, cysteine 634–cysteine 661, and cysteine 640–cysteine 657. The VWFA domain maps to 146–384 (PVDLYYLVDV…NLVVEAYQKL (239 aa)). The Mg(2+) site is built by aspartate 154 and serine 156. Ca(2+) is bound at residue aspartate 193. Residue asparagine 233 is glycosylated (N-linked (GlcNAc...) asparagine). The Ca(2+) site is built by asparagine 249, aspartate 251, proline 253, and glutamate 254. Glutamate 254 contributes to the Mg(2+) binding site. N-linked (GlcNAc...) asparagine glycosylation occurs at asparagine 402. N-linked (GlcNAc...) asparagine glycans are attached at residues asparagine 421, asparagine 431, and asparagine 456. 4 I-EGF domains span residues 471 to 495 (CEASRGGAAKCAEEAPLDSTCPQCQ), 499 to 547 (CHQE…KYCE), 548 to 584 (KDDFSCPYHHGSLCAGHGECEAGRCQCFSGWEGDRCQ), and 585 to 625 (CPSA…RFCE). Asparagine 648 carries N-linked (GlcNAc...) asparagine glycosylation. A helical transmembrane segment spans residues 684 to 703 (IFFIIFIVTFLIGLLKILII). At 704–768 (RQVILQWNSS…NAHETFRCNF (65 aa)) the chain is on the cytoplasmic side.

The protein belongs to the integrin beta chain family. In terms of assembly, heterodimer of an alpha and a beta subunit. Beta-8 (ITGB8) associates with alpha-V (ITGAV) to form ITGAV:ITGB8. ITGAV:ITGB8 interacts with TGFB1. As to expression, placenta, kidney, brain, ovary, uterus and in several transformed cells.

Its subcellular location is the cell membrane. Integrin alpha-V:beta-8 (ITGAV:ITGB8) is a receptor for fibronectin. It recognizes the sequence R-G-D in its ligands. Integrin alpha-V:beta-6 (ITGAV:ITGB6) mediates R-G-D-dependent release of transforming growth factor beta-1 (TGF-beta-1) from regulatory Latency-associated peptide (LAP), thereby playing a key role in TGF-beta-1 activation on the surface of activated regulatory T-cells (Tregs). Required during vasculogenesis. This chain is Integrin beta-8 (ITGB8), found in Oryctolagus cuniculus (Rabbit).